Reading from the N-terminus, the 104-residue chain is Translation initiation factor 1A (104 aa).

The segment covering Met-1–Val-14 has biased composition (low complexity). Positions Met-1–Asn-20 are disordered. An S1-like domain is found at Thr-12 to Thr-87.

It belongs to the eIF-1A family.

Seems to be required for maximal rate of protein biosynthesis. Enhances ribosome dissociation into subunits and stabilizes the binding of the initiator Met-tRNA(I) to 40 S ribosomal subunits. The chain is Translation initiation factor 1A (eIF1A) from Methanococcus maripaludis (strain C6 / ATCC BAA-1332).